A 389-amino-acid chain; its full sequence is Arrestin-C (389 aa).

This sequence belongs to the arrestin family. Retina and pineal gland.

May play a role in an as yet undefined retina-specific signal transduction. Could bind to photoactivated-phosphorylated red/green opsins. In Aquarana catesbeiana (American bullfrog), this protein is Arrestin-C (arr3).